Here is a 129-residue protein sequence, read N- to C-terminus: Cocaine- and amphetamine-regulated transcript protein (129 aa).

The N-terminal stretch at 1-27 is a signal peptide; it reads MESSRLRLLPLLGAALLLLLPLLGARA. Y41 is modified (phosphotyrosine). Residue S48 is modified to Phosphoserine. 3 disulfide bridges follow: C95-C113, C101-C121, and C115-C128.

Belongs to the CART family.

The protein localises to the secreted. Functionally, satiety factor closely associated with the actions of leptin and neuropeptide y; this anorectic peptide inhibits both normal and starvation-induced feeding and completely blocks the feeding response induced by neuropeptide Y and regulated by leptin in the hypothalamus. The polypeptide is Cocaine- and amphetamine-regulated transcript protein (Cartpt) (Mus musculus (Mouse)).